A 415-amino-acid chain; its full sequence is Tumor necrosis factor receptor superfamily member 3 (415 aa).

Residues 1–30 form the signal peptide; sequence MRLPRASSPCGLAWGPLLLGLSGLLVASQP. The Extracellular segment spans residues 31-223; sequence QLVPPYRIEN…NPPEPGAMLL (193 aa). Residue asparagine 40 is glycosylated (N-linked (GlcNAc...) asparagine). 4 TNFR-Cys repeats span residues 42 to 81, 82 to 124, 125 to 170, and 171 to 213; these read TCWD…TVCK, TCPH…KAEC, RCQP…VNCV, and PCKP…TICK. 10 disulfide bridges follow: cysteine 43-cysteine 58, cysteine 59-cysteine 72, cysteine 62-cysteine 80, cysteine 83-cysteine 98, cysteine 101-cysteine 116, cysteine 104-cysteine 124, cysteine 126-cysteine 132, cysteine 139-cysteine 150, cysteine 142-cysteine 169, and cysteine 172-cysteine 187. A glycan (N-linked (GlcNAc...) asparagine) is linked at asparagine 179. A helical transmembrane segment spans residues 224-244; it reads LAILLSLVLFLLFTTVLACAW. The Cytoplasmic segment spans residues 245-415; the sequence is MRHPSLCRKL…ETETLGCQDL (171 aa). The tract at residues 261–304 is disordered; that stretch reads HPEGEESPPCPAPRADPHFPDLAEPLLPMSGDLSPSPAGPPTAP. A Phosphoserine modification is found at serine 315. A disordered region spans residues 361–399; the sequence is LGGTRGPGDPPAPPEPPYPTPEEGAPGPSELSTPYQEDG. A compositionally biased stretch (pro residues) spans 368-380; it reads GDPPAPPEPPYPT.

In terms of assembly, self-associates; dimerization and trimerization are promoted by lymphotoxin (LTA(3)). Associates with TRAF3. Associates with TRAF4. Associates with TRAF5.

It localises to the membrane. Functionally, receptor for the heterotrimeric lymphotoxin containing LTA and LTB, and for TNFS14/LIGHT. Activates NF-kappa-B signaling upon stimulation with lymphotoxin. Promotes apoptosis via TRAF3 and TRAF5. May play a role in the development of lymphoid organs. Its function is as follows. (Microbial infection) Plays a role in host defense against Zika virus infection. The sequence is that of Tumor necrosis factor receptor superfamily member 3 (Ltbr) from Mus musculus (Mouse).